A 278-amino-acid polypeptide reads, in one-letter code: Diaminopimelate epimerase (278 aa).

Substrate-binding residues include asparagine 13 and asparagine 66. Residue cysteine 75 is the Proton donor of the active site. Substrate is bound by residues 76 to 77, asparagine 162, asparagine 195, and 213 to 214; these read GN and ER. Catalysis depends on cysteine 222, which acts as the Proton acceptor. Residue 223 to 224 participates in substrate binding; it reads GT.

This sequence belongs to the diaminopimelate epimerase family. Homodimer.

Its subcellular location is the cytoplasm. It carries out the reaction (2S,6S)-2,6-diaminopimelate = meso-2,6-diaminopimelate. Its pathway is amino-acid biosynthesis; L-lysine biosynthesis via DAP pathway; DL-2,6-diaminopimelate from LL-2,6-diaminopimelate: step 1/1. Its function is as follows. Catalyzes the stereoinversion of LL-2,6-diaminopimelate (L,L-DAP) to meso-diaminopimelate (meso-DAP), a precursor of L-lysine and an essential component of the bacterial peptidoglycan. This Trichodesmium erythraeum (strain IMS101) protein is Diaminopimelate epimerase.